The primary structure comprises 491 residues: Glutamyl-tRNA(Gln) amidotransferase subunit A (491 aa).

Active-site charge relay system residues include Lys76 and Ser154. Residue Ser178 is the Acyl-ester intermediate of the active site.

Belongs to the amidase family. GatA subfamily. As to quaternary structure, heterotrimer of A, B and C subunits.

The catalysed reaction is L-glutamyl-tRNA(Gln) + L-glutamine + ATP + H2O = L-glutaminyl-tRNA(Gln) + L-glutamate + ADP + phosphate + H(+). Allows the formation of correctly charged Gln-tRNA(Gln) through the transamidation of misacylated Glu-tRNA(Gln) in organisms which lack glutaminyl-tRNA synthetase. The reaction takes place in the presence of glutamine and ATP through an activated gamma-phospho-Glu-tRNA(Gln). This is Glutamyl-tRNA(Gln) amidotransferase subunit A from Cereibacter sphaeroides (strain ATCC 17023 / DSM 158 / JCM 6121 / CCUG 31486 / LMG 2827 / NBRC 12203 / NCIMB 8253 / ATH 2.4.1.) (Rhodobacter sphaeroides).